The sequence spans 527 residues: Berberine bridge enzyme-like 5 (527 aa).

An N-terminal signal peptide occupies residues 1–19; sequence MKALFSVLCLVLLVSILRA. Cys32 and Cys95 are disulfide-bonded. Residues Asn35 and Asn52 are each glycosylated (N-linked (GlcNAc...) asparagine). Positions 73–247 constitute an FAD-binding PCMH-type domain; that stretch reads NYQKLVAIVA…LSWKINLVEV (175 aa). The segment at residues 110–172 is a cross-link (6-(S-cysteinyl)-8alpha-(pros-histidyl)-FAD (His-Cys)); the sequence is HDYEGLSYTS…QTLAFPAGVC (63 aa). Residue Asn341 is glycosylated (N-linked (GlcNAc...) asparagine).

This sequence belongs to the oxygen-dependent FAD-linked oxidoreductase family. FAD is required as a cofactor. Post-translationally, the FAD cofactor is bound via a bicovalent 6-S-cysteinyl, 8alpha-N1-histidyl FAD linkage.

The protein resides in the secreted. It is found in the cell wall. Its function is as follows. Probable flavin-dependent oxidoreductase. The polypeptide is Berberine bridge enzyme-like 5 (Arabidopsis thaliana (Mouse-ear cress)).